We begin with the raw amino-acid sequence, 99 residues long: Plastocyanin (99 aa).

Residues 1–99 (VEVLLGASDG…AGMVGQVTVN (99 aa)) form the Plastocyanin-like domain. Residues His-37, Cys-84, His-87, and Met-92 each contribute to the Cu cation site.

Belongs to the plastocyanin family. It depends on Cu(2+) as a cofactor.

The protein localises to the plastid. It localises to the chloroplast thylakoid membrane. Its function is as follows. Participates in electron transfer between P700 and the cytochrome b6-f complex in photosystem I. The sequence is that of Plastocyanin (PETE) from Vicia faba (Broad bean).